The primary structure comprises 457 residues: MGLIAMSERDLQRIEVLSKVIDGRMTMVSAAHVLGLSTRQVRRLLDRISAGGAASIRHKAIGRPSNNRICDGVRDYAMAIVRERYADFGPTLAAEKLAELDGLTVSRETLRQWMADAGLWLSRKQRRTFHQPRLRREAYGELVQIDGSEHRWFEDRGDPCSLLVFIDDATGKLMQLRFVRSESAFTYFEALELYLKAHGAPVAFYSDKHSVFRVAKKDAKGGQGMTQFGRALCELNIEILCANSSQAKGRVERMNRTLQDRLIKDLRLEGICGMDDGNAFLPRFMERYNRQFAITPARSDDLHRPLNLAPDRLRDVLCKREQRYVGAQLTFSFERQRIMLEENEVTRGLVGRYVETHAYADGRLDVRWKGHSLPYRVFDKDQRVTHAAIIENKRLSDVLAYIKERQDERPAPKVRTNSEKNGYTPRGRKPGKRTDFMNDPVVIARRRQALSNLDAAE.

Residues 128-313 (TFHQPRLRRE…RPLNLAPDRL (186 aa)) form the Integrase catalytic domain. A disordered region spans residues 406–440 (QDERPAPKVRTNSEKNGYTPRGRKPGKRTDFMNDP).

The protein is Putative transposase y4bF of Sinorhizobium fredii (strain NBRC 101917 / NGR234).